The chain runs to 128 residues: Orchestin (128 aa).

The signal sequence occupies residues 1-20 (MNKVFIIGVCLFIVSQAVLA). The disordered stretch occupies residues 23 to 95 (WDSDESSDER…DEDSDDSQES (73 aa)). 2 stretches are compositionally biased toward basic and acidic residues: residues 30-49 (DERL…KLVV) and 56-81 (EDSN…RKLS). A compositionally biased stretch (acidic residues) spans 84-93 (TSDEDSDDSQ).

Phosphorylated on Ser and Tyr residues. Calcium-binding activity is dependent on serine phosphorylation but not on tyrosine phosphorylation. In terms of tissue distribution, posterior caeca epithelium of the gut.

It localises to the secreted. Plays a role in cuticle calcification. May induce precipitation of the calcium stored in the posterior caeca as calcium carbonate. The sequence is that of Orchestin from Cryptorchestia cavimana (Amphipod).